A 194-amino-acid polypeptide reads, in one-letter code: Outer surface 22 kDa lipoprotein (194 aa).

The N-terminal stretch at 1-21 is a signal peptide; it reads MYKNGFFKNYLSLFLIFLVIA. Cysteine 22 is lipidated: N-palmitoyl cysteine. A lipid anchor (S-diacylglycerol cysteine) is attached at cysteine 22.

The protein resides in the cell outer membrane. The polypeptide is Outer surface 22 kDa lipoprotein (p22) (Borreliella burgdorferi (strain ZS7) (Borrelia burgdorferi)).